The primary structure comprises 430 residues: Histidine--tRNA ligase (430 aa).

Belongs to the class-II aminoacyl-tRNA synthetase family. As to quaternary structure, homodimer.

The protein localises to the cytoplasm. The enzyme catalyses tRNA(His) + L-histidine + ATP = L-histidyl-tRNA(His) + AMP + diphosphate + H(+). This is Histidine--tRNA ligase from Acinetobacter baumannii (strain ACICU).